Here is a 277-residue protein sequence, read N- to C-terminus: Inhibition of morphological differentiation protein (277 aa).

Mg(2+) contacts are provided by D18, D20, and D192.

It belongs to the HAD-like hydrolase superfamily. SerB family.

This Streptomyces azureus protein is Inhibition of morphological differentiation protein.